A 732-amino-acid chain; its full sequence is Alpha-galactosidase Mel36A (732 aa).

Substrate contacts are provided by residues 370–371 (DD), Trp415, Arg447, 480–484 (KWDMN), 530–533 (CSGG), and Asp552. Residue Asp482 is the Nucleophile of the active site. Residue Asp552 is the Proton donor of the active site.

This sequence belongs to the glycosyl hydrolase 36 family. As to quaternary structure, homotetramer.

It carries out the reaction Hydrolysis of terminal, non-reducing alpha-D-galactose residues in alpha-D-galactosides, including galactose oligosaccharides, galactomannans and galactolipids.. Its function is as follows. Hydrolyzes the short-chain alpha-galactosaccharide raffinose. This is Alpha-galactosidase Mel36A from Lactobacillus acidophilus (strain ATCC 700396 / NCK56 / N2 / NCFM).